A 78-amino-acid polypeptide reads, in one-letter code: Putative DPH3 homolog B (78 aa).

The DPH-type MB domain maps to 4-60 (FHDEVEIEDFQYDEDSETYFCPCPCGDNFSITKEELENGEGVAMCPGCSLIIKVIYD). Zn(2+) is bound by residues Cys-26, Cys-28, Cys-48, and Cys-51.

It belongs to the DPH3 family.

The protein is Putative DPH3 homolog B (DPH3P1) of Homo sapiens (Human).